A 116-amino-acid polypeptide reads, in one-letter code: Ig heavy chain V-A1 region BS-5 (116 aa).

Position 1 is a pyrrolidone carboxylic acid (Gln1). Positions 1 to 107 constitute an Ig-like domain; that stretch reads QSVEESGGRL…LVHLAFVDVW (107 aa).

The protein is Ig heavy chain V-A1 region BS-5 of Oryctolagus cuniculus (Rabbit).